We begin with the raw amino-acid sequence, 520 residues long: Glucose-1-phosphate adenylyltransferase small subunit, chloroplastic (520 aa).

The N-terminal 71 residues, 1 to 71 (MATMAAIGSL…RTPSIVSPKA (71 aa)), are a transit peptide targeting the chloroplast. Positions 1-81 (MATMAAIGSL…VSDSQNSQTC (81 aa)) are disordered. The segment covering 14–27 (SSSSNHTRRLSSSS) has biased composition (low complexity). A compositionally biased stretch (polar residues) spans 28–51 (QRKTLSFSSSSLTGEKLNPTQEII).

The protein belongs to the bacterial/plant glucose-1-phosphate adenylyltransferase family. In terms of assembly, heterotetramer. In terms of tissue distribution, leaves.

It localises to the plastid. Its subcellular location is the chloroplast. The enzyme catalyses alpha-D-glucose 1-phosphate + ATP + H(+) = ADP-alpha-D-glucose + diphosphate. It participates in glycan biosynthesis; starch biosynthesis. Activated by 3'phosphoglycerate, inhibited by orthophosphate. Allosteric regulation. This protein plays a role in synthesis of starch. It catalyzes the synthesis of the activated glycosyl donor, ADP-glucose from Glc-1-P and ATP. This Brassica napus (Rape) protein is Glucose-1-phosphate adenylyltransferase small subunit, chloroplastic (AGPS1).